The following is a 248-amino-acid chain: Probable transcriptional regulatory protein RPB_4273 (248 aa).

A disordered region spans residues 1–22 (MAGHSQFKNIMHRKGKQDAQRS).

The protein belongs to the TACO1 family.

The protein resides in the cytoplasm. This is Probable transcriptional regulatory protein RPB_4273 from Rhodopseudomonas palustris (strain HaA2).